We begin with the raw amino-acid sequence, 60 residues long: MDHRLLEIIACPVCNGKLWYNQEKQELICKLDNLAFPLRDGIPVLLETEARVLTADESKS.

The protein belongs to the UPF0434 family.

The chain is UPF0434 protein YcaR from Escherichia coli O139:H28 (strain E24377A / ETEC).